The chain runs to 78 residues: Major outer membrane lipoprotein Lpp (78 aa).

The N-terminal stretch at 1-20 is a signal peptide; sequence MNRTKIVLGAVVLASTLLAG. Cysteine 21 carries the N-palmitoyl cysteine lipid modification. A lipid anchor (S-diacylglycerol cysteine) is attached at cysteine 21. Repeats lie at residues 24 to 34 and 38 to 48; these read TAKVDQLTSDI and NAKVDQLSNDV. Positions 27-75 form a coiled coil; it reads VDQLTSDIQTLNAKVDQLSNDVNAVHTDVQAAKDDAARANQRLDNQVRS. Lysine 78 carries the N6-murein peptidoglycan lysine modification.

It belongs to the Lpp family. As to quaternary structure, homotrimer.

It localises to the cell outer membrane. The protein resides in the secreted. The protein localises to the cell wall. In terms of biological role, a highly abundant outer membrane lipoprotein that controls the distance between the inner and outer membranes. The only protein known to be covalently linked to the peptidoglycan network (PGN). Also non-covalently binds the PGN. The link between the cell outer membrane and PGN contributes to maintenance of the structural and functional integrity of the cell envelope, and maintains the correct distance between the PGN and the outer membrane. This chain is Major outer membrane lipoprotein Lpp, found in Photorhabdus laumondii subsp. laumondii (strain DSM 15139 / CIP 105565 / TT01) (Photorhabdus luminescens subsp. laumondii).